The following is a 420-amino-acid chain: Cytochrome c biogenesis protein Ccs1 (420 aa).

Transmembrane regions (helical) follow at residues 12 to 32 (LRFS…GTVI), 71 to 91 (TWWF…CTFL), and 157 to 177 (IAPI…IVGS).

Belongs to the Ccs1/CcsB family. As to quaternary structure, may interact with CcsA.

It is found in the plastid. Its subcellular location is the chloroplast thylakoid membrane. In terms of biological role, required during biogenesis of c-type cytochromes (cytochrome c6 and cytochrome f) at the step of heme attachment. The sequence is that of Cytochrome c biogenesis protein Ccs1 from Phaeodactylum tricornutum (strain CCAP 1055/1).